The sequence spans 356 residues: S-adenosylmethionine:tRNA ribosyltransferase-isomerase (356 aa).

It belongs to the QueA family. As to quaternary structure, monomer.

The protein localises to the cytoplasm. It carries out the reaction 7-aminomethyl-7-carbaguanosine(34) in tRNA + S-adenosyl-L-methionine = epoxyqueuosine(34) in tRNA + adenine + L-methionine + 2 H(+). It participates in tRNA modification; tRNA-queuosine biosynthesis. Transfers and isomerizes the ribose moiety from AdoMet to the 7-aminomethyl group of 7-deazaguanine (preQ1-tRNA) to give epoxyqueuosine (oQ-tRNA). The polypeptide is S-adenosylmethionine:tRNA ribosyltransferase-isomerase (Histophilus somni (strain 2336) (Haemophilus somnus)).